Here is a 700-residue protein sequence, read N- to C-terminus: Pyrroloquinoline quinone transporter (700 aa).

The first 23 residues, 1-23, serve as a signal peptide directing secretion; it reads MKIFSVRQTVLPALLVLSPVVFA. The 119-residue stretch at 39 to 157 folds into the TBDR plug domain; sequence SELDTPAAVS…SGGVMNVTTQ (119 aa). Transmembrane regions (beta stranded) follow at residues 132-136, 150-160, 162-171, 177-186, 195-204, 220-227, 233-241, 280-288, 295-301, 335-344, 350-358, 398-405, 411-419, 447-456, 464-468, 500-509, 511-520, 549-556, 563-570, 597-604, 611-617, 637-647, 651-659, and 689-697; these read NVEVL, GVMNVTTQTGQ, PPTIEASSYY, WRYGLKATGA, DVDYTVSTTR, LANAKLGV, SKLSLIFNS, QAGLRYERS, MSVMMYA, GIDSRWTHRG, VTFTTGLNY, DPYLQTQW, LSLDAGVRY, WLPAGSLKYA, YLAAG, TIEIGSKTRI, DGLLSLALFQ, GAELAWDQ, RVNASWTW, MGFASIGY, YAGTEAR, LVGLFTGYKYN, LTVDLFGRV, and YGVGMNIAW. The TBDR beta-barrel domain occupies 162–697; that stretch reads PPTIEASSYY…NYGVGMNIAW (536 aa). The TonB C-terminal box signature appears at 680-700; the sequence is YYEPSPGRNYGVGMNIAWRFE.

The protein belongs to the TonB-dependent receptor family.

Its subcellular location is the cell outer membrane. Its function is as follows. Mediates the TonB-dependent high affinity transport across the outer membrane of pyrroloquinoline quinone (PQQ), a redox cofactor required for the activity of Gcd and Asd dehydrogenases. The uptake process is energised via the TonB-ExbBD complex. Not involved in the transport of an iron-containing substrate under laboratory conditions. This is Pyrroloquinoline quinone transporter from Escherichia coli (strain K12).